The primary structure comprises 459 residues: Elongation factor 1-alpha (459 aa).

The residue at position 2 (Gly2) is a N,N,N-trimethylglycine. Lys3 bears the N6,N6-dimethyllysine; alternate mark. Lys3 is modified (N6-methyllysine; alternate). The region spanning 5–239 is the tr-type G domain; it reads KSHINVVVIG…DAIDPPSRPT (235 aa). Positions 14–21 are G1; it reads GHVDSGKS. 14–21 contacts GTP; the sequence is GHVDSGKS. Lys30 bears the N6-methyllysine mark. The segment at 70-74 is G2; it reads GITID. N6,N6,N6-trimethyllysine is present on Lys79. A G3 region spans residues 91 to 94; sequence DAPG. GTP contacts are provided by residues 91 to 95 and 153 to 156; these read DAPGH and NKMD. A G4 region spans residues 153-156; the sequence is NKMD. The G5 stretch occupies residues 192 to 194; it reads SGF. Lys315 is modified (N6,N6-dimethyllysine; alternate). N6-methyllysine; alternate is present on Lys315. N6-methyllysine is present on Lys389.

The protein belongs to the TRAFAC class translation factor GTPase superfamily. Classic translation factor GTPase family. EF-Tu/EF-1A subfamily.

The protein resides in the cytoplasm. Functionally, this protein promotes the GTP-dependent binding of aminoacyl-tRNA to the A-site of ribosomes during protein biosynthesis. This chain is Elongation factor 1-alpha (TEF1), found in Aureobasidium pullulans (Black yeast).